Consider the following 252-residue polypeptide: Phosphoribosyl-ATP pyrophosphatase (252 aa).

The protein belongs to the PRA-PH family.

The protein localises to the cytoplasm. The enzyme catalyses 1-(5-phospho-beta-D-ribosyl)-ATP + H2O = 1-(5-phospho-beta-D-ribosyl)-5'-AMP + diphosphate + H(+). It participates in amino-acid biosynthesis; L-histidine biosynthesis; L-histidine from 5-phospho-alpha-D-ribose 1-diphosphate: step 2/9. This Magnetococcus marinus (strain ATCC BAA-1437 / JCM 17883 / MC-1) protein is Phosphoribosyl-ATP pyrophosphatase.